Consider the following 169-residue polypeptide: Ribosome maturation factor RimM (169 aa).

The PRC barrel domain occupies 95–168 (EGNYYIFQIV…KMKVELLEGL (74 aa)).

The protein belongs to the RimM family. Binds ribosomal protein uS19.

The protein resides in the cytoplasm. Functionally, an accessory protein needed during the final step in the assembly of 30S ribosomal subunit, possibly for assembly of the head region. Essential for efficient processing of 16S rRNA. May be needed both before and after RbfA during the maturation of 16S rRNA. It has affinity for free ribosomal 30S subunits but not for 70S ribosomes. The sequence is that of Ribosome maturation factor RimM from Desulforamulus reducens (strain ATCC BAA-1160 / DSM 100696 / MI-1) (Desulfotomaculum reducens).